The following is a 399-amino-acid chain: Syndecan (399 aa).

Residues M1–A28 form the signal peptide. The segment at A28–G319 is disordered. The Extracellular segment spans residues Q29 to I340. The span at P36–S46 shows a compositional bias: low complexity. An O-linked (Xyl...) (glycosaminoglycan) serine glycan is attached at S62. A compositionally biased stretch (basic and acidic residues) spans G67–D77. O-linked (Xyl...) (glycosaminoglycan) serine glycosylation is found at S79, S81, and S110. The span at S99–H116 shows a compositional bias: polar residues. Positions T117 to T172 are enriched in low complexity. N-linked (GlcNAc...) asparagine glycosylation is present at N160. Residues T191 to D214 show a composition bias toward acidic residues. The O-linked (Xyl...) (glycosaminoglycan) serine glycan is linked to S194. The span at Y215–D226 shows a compositional bias: basic and acidic residues. The segment covering D253–I270 has biased composition (acidic residues). Positions P299–D309 are enriched in polar residues. Residues L341–R365 traverse the membrane as a helical segment. Residues M366–A399 lie on the Cytoplasmic side of the membrane. The disordered stretch occupies residues S373 to A399. Residues P383–A399 show a composition bias toward polar residues.

This sequence belongs to the syndecan proteoglycan family. As to expression, in 13-16 hours embryos, expressed in lymph glands, peripheral and central nervous system and basal surfaces of gut epithelia. Sdc and robo are coexpressed in domains adjacent to slit; in tracheal pits and midline glia cells.

The protein resides in the membrane. Functionally, cell surface proteoglycan that bears heparan sulfate. Required for axonal and myotube guidance, is a necessary component of slit/robo signaling and is required in the slit target cells. The sequence is that of Syndecan (Sdc) from Drosophila melanogaster (Fruit fly).